Here is a 234-residue protein sequence, read N- to C-terminus: Ubiquinone biosynthesis O-methyltransferase (234 aa).

Residues arginine 39, glycine 59, aspartate 80, and methionine 124 each coordinate S-adenosyl-L-methionine.

It belongs to the methyltransferase superfamily. UbiG/COQ3 family.

The catalysed reaction is a 3-demethylubiquinol + S-adenosyl-L-methionine = a ubiquinol + S-adenosyl-L-homocysteine + H(+). The enzyme catalyses a 3-(all-trans-polyprenyl)benzene-1,2-diol + S-adenosyl-L-methionine = a 2-methoxy-6-(all-trans-polyprenyl)phenol + S-adenosyl-L-homocysteine + H(+). The protein operates within cofactor biosynthesis; ubiquinone biosynthesis. O-methyltransferase that catalyzes the 2 O-methylation steps in the ubiquinone biosynthetic pathway. The protein is Ubiquinone biosynthesis O-methyltransferase of Aliivibrio fischeri (strain ATCC 700601 / ES114) (Vibrio fischeri).